A 631-amino-acid chain; its full sequence is Phosphomethylpyrimidine synthase (631 aa).

Substrate contacts are provided by residues Asn239, Met268, Tyr297, His333, 353–355 (SRG), 394–397 (DGLR), and Glu433. His437 contacts Zn(2+). A substrate-binding site is contributed by Tyr460. His501 is a binding site for Zn(2+). [4Fe-4S] cluster is bound by residues Cys581, Cys584, and Cys589.

This sequence belongs to the ThiC family. As to quaternary structure, homodimer. [4Fe-4S] cluster is required as a cofactor.

The enzyme catalyses 5-amino-1-(5-phospho-beta-D-ribosyl)imidazole + S-adenosyl-L-methionine = 4-amino-2-methyl-5-(phosphooxymethyl)pyrimidine + CO + 5'-deoxyadenosine + formate + L-methionine + 3 H(+). It functions in the pathway cofactor biosynthesis; thiamine diphosphate biosynthesis. Catalyzes the synthesis of the hydroxymethylpyrimidine phosphate (HMP-P) moiety of thiamine from aminoimidazole ribotide (AIR) in a radical S-adenosyl-L-methionine (SAM)-dependent reaction. This Escherichia coli O127:H6 (strain E2348/69 / EPEC) protein is Phosphomethylpyrimidine synthase.